The primary structure comprises 231 residues: ATP phosphoribosyltransferase (231 aa).

It belongs to the ATP phosphoribosyltransferase family. Short subfamily. In terms of assembly, heteromultimer composed of HisG and HisZ subunits.

Its subcellular location is the cytoplasm. It catalyses the reaction 1-(5-phospho-beta-D-ribosyl)-ATP + diphosphate = 5-phospho-alpha-D-ribose 1-diphosphate + ATP. Its pathway is amino-acid biosynthesis; L-histidine biosynthesis; L-histidine from 5-phospho-alpha-D-ribose 1-diphosphate: step 1/9. In terms of biological role, catalyzes the condensation of ATP and 5-phosphoribose 1-diphosphate to form N'-(5'-phosphoribosyl)-ATP (PR-ATP). Has a crucial role in the pathway because the rate of histidine biosynthesis seems to be controlled primarily by regulation of HisG enzymatic activity. The sequence is that of ATP phosphoribosyltransferase (hisG) from Rhizobium meliloti (strain 1021) (Ensifer meliloti).